A 358-amino-acid chain; its full sequence is MSKSKDPIFFSTGGLDNFISPKMRPLNGTAGEQWEFDGVSDDAKLAFVFGFYRDPNYAILGSGNLRVSVEMAWPNGSRFAQVDYPTDNIIEECDWGTRGIWRSNDFNYTFEITADMKRARVGMHTPQVTGIVSMTSTSQPRYPDGRTYPSENSTSEALPYFHFVEPIPVARAHVDMTILGEKFAWDGLGGMERLWGAFSWFTCLQGMNVIRILAGPYSLSMLSFTSNIKKGREYPSIALFDNGEPVFSSQNTEESDVNDYFSFTKTYDGKVTGTLRDKVTGYELELVSPGRQLHWTFLIDHANLAFEYILGRGTGGSGFSAWVNGGRMGREQFKGIALTEALTFPKKSPLFRPQYSED.

It belongs to the Diels-Alderase family.

It participates in mycotoxin biosynthesis. Its function is as follows. Diels-Alderase; part of the gene cluster that mediates the biosynthesis of the mycotoxins phomacins, leucine-derived cytochalasans with potent actin polymerization-inhibitory activities and monocot-specific antigerminative activities. The first step in the pathway is catalyzed by the hybrid PKS-NRPS phmA, assisted by the enoyl reductase phmE, that are responsible for fusion of the leucine precursor and the polyketide backbone to produce a 2-pyrrolidone intermediate. The polyketide synthase module (PKS) of phmA is responsible for the synthesis of the polyketide backbone and the downstream nonribosomal peptide synthetase (NRPS) amidates the carboxyl end of the polyketide with the leucine precursor. Because phmA lacks a designated enoylreductase (ER) domain, the required activity is provided the enoyl reductase phmE. Reduction by the hydrolyase phmG, followed by dehydration and intra-molecular Diels-Alder cyclization by the Diels-Alderase phmD then yield the required isoindolone-fused macrocycle. A number of oxidative steps catalyzed by the tailoring cytochrome P450 monooxygenase phmB, the FAD-linked oxidoreductase phmC and the short-chain dehydrogenase/reductase phmF, are further required to afford the final products, phomacin D and phomacin E. The sequence is that of Diels-Alderase phmD from Phaeosphaeria nodorum (strain SN15 / ATCC MYA-4574 / FGSC 10173) (Glume blotch fungus).